The primary structure comprises 395 residues: GPI-anchor transamidase (395 aa).

The N-terminal stretch at 1-27 (MAAPCFLTLRVATLAALALLSLGSSAA) is a signal peptide. The Lumenal portion of the chain corresponds to 28-368 (GHIEDQAEQF…PKPRDWHPPG (341 aa)). The Ca(2+) site is built by Asp79, Ile82, Glu118, and Asp120. His164 functions as the Proton donor in the catalytic mechanism. The Nucleophile; acyl-thioester intermediate role is filled by Cys206. Positions 206, 232, and 234 each coordinate a protein. The interval 231 to 236 (DSLSHQ) is autoinhibitory loop. A disulfide bridge links Cys275 with Cys280. The helical transmembrane segment at 369–385 (GFILGLWALIIMVFFKT) threads the bilayer. Residues 386–395 (YGIKHMKFIF) are Cytoplasmic-facing.

Belongs to the peptidase C13 family. As to quaternary structure, heteropentamer. Part of the GPI-anchor transamidase complex, consisting of PIGK, PIGT, PIGS, PIGU and GAA1. Interacts with GPAA1. Interacts with PIGT; this interaction, via a disulfide link, stabilizes the expression of GAA1 and PIGK and links them to PIGS. Post-translationally, the disulfide bond between PIGK/GPI8 and PIGT is important for normal enzyme activity.

Its subcellular location is the endoplasmic reticulum membrane. Its pathway is glycolipid biosynthesis; glycosylphosphatidylinositol-anchor biosynthesis. Its activity is regulated as follows. In the absence of proproteins substrates, exists in an inactive state with a disrupted catalytic site by an autoinhibitory loop. The binding of proprotein substrates, particularly the CSP region, to GPI-T triggers concerted conformational changes that alleviate the inhibition by the autoinhibitory loop. Meanwhile, proprotein residues near the omega- site induce the formation of a catalytic cleft for catalysis, following which the products are released and GPI-T reverts to the inactive state. Functionally, catalytic subunit of the glycosylphosphatidylinositol-anchor (GPI-anchor) transamidase (GPI-T) complex that catalyzes the formation of the linkage between a proprotein and a GPI-anchor and participates in GPI anchored protein biosynthesis. Recognizes diverse proproteins at a C-terminal signal peptide (CSP) region that lacks consensus sequence and replaces it with a GPI-anchor via a transamidation reaction. Transamidation catalysis reaction follows a two-phase mechanism. In the acyl-enzyme phase, the carbonyl group of the proproteins's omega-site undergoes a nucleophilic attack forming an enzyme-substrate thioester bond. Followed by a general acid catalysis that allows CSP releasing, regenerating the carbonyl, and forming the acyl-enzyme intermediate. In the GPI-anchor attachment phase, the amino group of the GPI-anchor's ethanolamine phosphate, the one on third mannose (EtNP3), mediates a nucleophilic attack on the carbonyl of the acyl-enzyme intermediate, replacing the CSP, allowing GPI-anchor attachment to the omega-residue, therefore forming the product and freeing the enzyme. The sequence is that of GPI-anchor transamidase from Mus musculus (Mouse).